An 888-amino-acid chain; its full sequence is Transmembrane channel-like protein 2 (888 aa).

A disordered region spans residues 1 to 128 (MSPQLKSLDE…SLGSSVSTGD (128 aa)). Topologically, residues 1-228 (MSPQLKSLDE…KIKDIESHFG (228 aa)) are cytoplasmic. Basic and acidic residues-rich tracts occupy residues 7 to 16 (SLDEEGDKSA), 32 to 44 (DGHR…KDPA), and 87 to 110 (RTSL…EAGK). Residues 117–128 (STSLGSSVSTGD) show a composition bias toward polar residues. Residues 229–266 (SSVASYFIFLRWMYGVNLVLFGLIFGLVIIPEVLMGMP) form a helical membrane-spanning segment. Residues 267-317 (YGSIPRKTVPRAEEERAMDFSVLWDFEGYIKYSALFYGYYNNQRTIGWLRY) lie on the Extracellular side of the membrane. The chain crosses the membrane as a helical span at residues 318–350 (RLPMAYFMVGVSVFGYSLMIVIRSMASNTQGST). The Cytoplasmic segment spans residues 351–406 (SEGDSDSFTFSFKMFTSWDYLIGNSETADNKYVSITTSFKESIVDEQESNKEGNIH). Residues 407-437 (LTRFLRVLANFLILCCLCGSGYLIYFVVKRS) traverse the membrane as a helical segment. Residues 438 to 447 (QEFSKMQNVS) are Extracellular-facing. Residues 448 to 475 (WYERNEVEIVMSLLGMFCPPLFETIAAL) traverse the membrane as a helical segment. Residues 476-479 (ENYH) are Cytoplasmic-facing. The helical transmembrane segment at 480–514 (PRTGLKWQLGRIFALFLGNLYTFLLALMDDVHLKL) threads the bilayer. Over 515–556 (SNEEKIKNITHWTLFNYYNSSGGNESVPRPPPHPADVPRGSC) the chain is Extracellular. Residues 557–594 (WETAVGIEFMRLTVSDMLVTYLTILVGDFLRACFVRFM) traverse the membrane as a helical segment. Topologically, residues 595–613 (NHCWCWDLEAGFPSYAEFD) are cytoplasmic. A helical membrane pass occupies residues 614 to 634 (ISGNVLGLIFNQGMIWMGSFY). The Extracellular segment spans residues 635 to 637 (APG). A helical membrane pass occupies residues 638-660 (LVGINVLRLLTSMYFQCWAVMSS). Over 661–674 (NVPHERVFKASRSN) the chain is Cytoplasmic. Residues 675–698 (NFYMGLLLLVLFLSLLPVAYTVMS) form a helical membrane-spanning segment. Residues 699-741 (LPPSFDCGPFSGKNRMYDVLHETIENDFPKFLGKIFAFLANPG) are Extracellular-facing. The chain crosses the membrane as a helical span at residues 742–775 (LIIPAILLMFLAIYYLNSVSKSLSRANAQLRKKI). Over 776–888 (QALREVEKNH…SGKRTQRPHN (113 aa)) the chain is Cytoplasmic. Residues 813-888 (LTKEEPTSHS…SGKRTQRPHN (76 aa)) form a disordered region. Composition is skewed to polar residues over residues 836 to 851 (PHTS…STSW) and 866 to 881 (GQPQ…PSGK).

Belongs to the TMC family. As to quaternary structure, forms the MET channel composed of TMC dimer (TMC1 or TMC2), TMIE, TOMT, CIB (CIB2 or CIB3), LHFPL5 and PDH15. The interaction of TMC1 and TMC2 with TOMT is required for the transportation of TMC1/2 into the stereocilia of hair cells. Interacts (via N-terminus) with both isoforms CD1 and CD3 of PCDH15. Can form a heterodimer with TMC1, TMC5 or TMC7. In terms of tissue distribution, inner ear and testis. Expressed in cochlear inner and outer hair cells and vestibular organ hair cells.

It is found in the cell membrane. The enzyme catalyses Ca(2+)(in) = Ca(2+)(out). Its function is as follows. Pore-forming subunit of the mechanotransducer (MET) non-selective cation channel complex located at the tips of stereocilia of cochlear hair cells and that mediates sensory transduction in the auditory system. The MET complex is composed of two dimeric pore-forming ion-conducting transmembrane TMC (TMC1 or TMC2) subunits, several auxiliary proteins including LHFPL5, TMIE, CIB2/3 and TOMT, the tip-link PCDH15, and possibly the PIEZO subunits. MET channel is activated by tension in the tip-link extending from the side wall of one stereocilium to the tip of the adjacent shorter stereocilium, where the channel is located. TMC2 MET channel is highly permeable to calcium and likely transports monovalent cations. Also involved in vestibular hair cell transduction current of the mammalian inner ear. In Mus musculus (Mouse), this protein is Transmembrane channel-like protein 2.